We begin with the raw amino-acid sequence, 406 residues long: MGHDIDQVAPLLREPANFQLRTNCDPHEDNFGLRAHGPLVRIVGESSTQLGRDFVWQAHGYEVVRRILGDHEHFTTRPQFTQSKSGAHVEAQFVGQISTYDPPEHTRLRKMLTPEFTVRRIRRMEPAIQSLIDDRLDLLEAEGPSADLQGLFADPVGAHALCELLGIPRDDQREFVRRIRRNADLSRGLKARAADSAAFNRYLDNLLARQRADPDDGLLGMIVRDHGDNVTDEELKGLCTALILGGVETVAGMIGFGVLALLDNPGQIELLFESPEKAERVVNELVRYLSPVQAPNPRLAIKDVVIDGQLIKAGDYVLCSILMANRDEALTPDPDVLDANRAAVSDVGFGHGIHYCVGAALARSMLRMAYQTLWRRFPGLRLAVPIEEVKYRSAFVDCPDQVPVTW.

Heme is bound at residue Cys-356.

This sequence belongs to the cytochrome P450 family. It depends on heme as a cofactor.

It functions in the pathway antibiotic biosynthesis; vancomycin biosynthesis. Involved in the coupling of aromatic side chains of the heptapeptide of vancomycin. This chain is Cytochrome P450 165C4 (cyp165C4), found in Amycolatopsis orientalis (Nocardia orientalis).